The chain runs to 257 residues: Hydroxyacylglutathione hydrolase (257 aa).

His-55, His-57, Asp-59, His-60, His-112, Asp-129, and His-167 together coordinate Zn(2+).

Belongs to the metallo-beta-lactamase superfamily. Glyoxalase II family. Monomer. Requires Zn(2+) as cofactor.

It carries out the reaction an S-(2-hydroxyacyl)glutathione + H2O = a 2-hydroxy carboxylate + glutathione + H(+). The protein operates within secondary metabolite metabolism; methylglyoxal degradation; (R)-lactate from methylglyoxal: step 2/2. Its function is as follows. Thiolesterase that catalyzes the hydrolysis of S-D-lactoyl-glutathione to form glutathione and D-lactic acid. The protein is Hydroxyacylglutathione hydrolase of Pseudoalteromonas translucida (strain TAC 125).